A 477-amino-acid chain; its full sequence is Glycogen synthase (477 aa).

Lysine 15 is a binding site for ADP-alpha-D-glucose.

It belongs to the glycosyltransferase 1 family. Bacterial/plant glycogen synthase subfamily.

It carries out the reaction [(1-&gt;4)-alpha-D-glucosyl](n) + ADP-alpha-D-glucose = [(1-&gt;4)-alpha-D-glucosyl](n+1) + ADP + H(+). The protein operates within glycan biosynthesis; glycogen biosynthesis. Functionally, synthesizes alpha-1,4-glucan chains using ADP-glucose. This is Glycogen synthase from Streptococcus pneumoniae serotype 4 (strain ATCC BAA-334 / TIGR4).